The following is a 208-amino-acid chain: Putative archaetidylserine decarboxylase proenzyme (208 aa).

The active-site Schiff-base intermediate with substrate; via pyruvic acid is Ser-171. Ser-171 carries the post-translational modification Pyruvic acid (Ser); by autocatalysis.

It belongs to the phosphatidylserine decarboxylase family. PSD-A subfamily. In terms of assembly, heterodimer of a large membrane-associated beta subunit and a small pyruvoyl-containing alpha subunit. Pyruvate is required as a cofactor. Post-translationally, is synthesized initially as an inactive proenzyme. Formation of the active enzyme involves a self-maturation process in which the active site pyruvoyl group is generated from an internal serine residue via an autocatalytic post-translational modification. Two non-identical subunits are generated from the proenzyme in this reaction, and the pyruvate is formed at the N-terminus of the alpha chain, which is derived from the carboxyl end of the proenzyme. The post-translation cleavage follows an unusual pathway, termed non-hydrolytic serinolysis, in which the side chain hydroxyl group of the serine supplies its oxygen atom to form the C-terminus of the beta chain, while the remainder of the serine residue undergoes an oxidative deamination to produce ammonia and the pyruvoyl prosthetic group on the alpha chain.

Its subcellular location is the cell membrane. It carries out the reaction archaetidylserine + H(+) = archaetidylethanolamine + CO2. In terms of biological role, catalyzes the formation of archaetidylethanolamine (PtdEtn) from archaetidylserine (PtdSer). This is Putative archaetidylserine decarboxylase proenzyme from Methanococcoides burtonii (strain DSM 6242 / NBRC 107633 / OCM 468 / ACE-M).